The chain runs to 238 residues: tRNA (guanine-N(1)-)-methyltransferase (238 aa).

Residues Gly-108 and 127–132 (LGDFVL) each bind S-adenosyl-L-methionine.

The protein belongs to the RNA methyltransferase TrmD family. Homodimer.

It is found in the cytoplasm. The enzyme catalyses guanosine(37) in tRNA + S-adenosyl-L-methionine = N(1)-methylguanosine(37) in tRNA + S-adenosyl-L-homocysteine + H(+). Functionally, specifically methylates guanosine-37 in various tRNAs. The protein is tRNA (guanine-N(1)-)-methyltransferase of Streptococcus uberis (strain ATCC BAA-854 / 0140J).